Consider the following 599-residue polypeptide: Nucleoporin p58/p45 (599 aa).

Tandem repeats lie at residues Phe-7–Gly-8, Phe-30–Gly-31, Phe-44–Gly-45, Phe-63–Gly-64, and Phe-68–Gly-69. A 14 X 2 AA repeats of F-G region spans residues Phe-7 to Gly-579. Residues Asn-213–Leu-247 are disordered. Residues Ser-225–Asn-246 are compositionally biased toward basic and acidic residues. Coiled coils occupy residues Glu-256–Ser-276 and Glu-314–Thr-381. Thr-331 bears the Phosphothreonine mark. Tandem repeats lie at residues Phe-488–Gly-489, Phe-492–Gly-493, Phe-513–Gly-514, Phe-519–Gly-520, Phe-529–Gly-530, Phe-531–Gly-532, Phe-545–Gly-546, Phe-568–Gly-569, and Phe-578–Gly-579. Positions Gly-579–Arg-599 are disordered.

The protein belongs to the NUP58 family. As to quaternary structure, component of the p62 complex, a complex at least composed of NUP62, NUP54, and NUP58. Interacts with NUTF2. Interacts with SRP1-alpha and Importin p97 proteins when they are together, but not with SRP1-alpha protein alone. In terms of processing, O-glycosylated.

It localises to the nucleus. Its subcellular location is the nuclear pore complex. The protein localises to the nucleus membrane. In terms of biological role, component of the nuclear pore complex, a complex required for the trafficking across the nuclear membrane. The polypeptide is Nucleoporin p58/p45 (Homo sapiens (Human)).